The following is a 172-amino-acid chain: Translation initiation factor IF-3 (172 aa).

This sequence belongs to the IF-3 family. In terms of assembly, monomer.

It is found in the cytoplasm. In terms of biological role, IF-3 binds to the 30S ribosomal subunit and shifts the equilibrium between 70S ribosomes and their 50S and 30S subunits in favor of the free subunits, thus enhancing the availability of 30S subunits on which protein synthesis initiation begins. This Oceanobacillus iheyensis (strain DSM 14371 / CIP 107618 / JCM 11309 / KCTC 3954 / HTE831) protein is Translation initiation factor IF-3.